The following is a 226-amino-acid chain: Apoptosis regulator OPG045 (226 aa).

It belongs to the orthopoxvirus OPG045 family. In terms of assembly, homodimer. Interacts with host pro-apoptotic protein BCL2L11 (via BH3 domain). Interacts with host NLRP1. Interacts with host BAK.

Its subcellular location is the host mitochondrion outer membrane. The protein resides in the host cytoplasm. Its function is as follows. Plays a role in evading host innate immune response by inhibiting host inflammasome activation. Interacts with and inhibits NLR-mediated interleukin-1 beta/IL1B production in infected cells. At the host mitochondria outer membrane, interacts with the BH3 domain of host BAK and prevents BAK from binding active BAX. In turn, host apoptosis is inhibited. This Vaccinia virus (strain Copenhagen) (VACV) protein is Apoptosis regulator OPG045 (OPG045).